We begin with the raw amino-acid sequence, 354 residues long: MKAARFYNKGDIRIEDIPEPTVAPGTVGINVAWCGICGTDLHEFMEGPIFIPPCGHPHPISGESAPVTMGHEFSGVVYAVGEGVDDIKVGQHVVVEPYIIRDDVPTGEGSNYHLSKDMNFIGLGGCGGGLSEKIAVKRRWVHPISDKIPLDQAALIEPLSVGHHAYVRSGAKAGDVALVGGAGPIGLLLAAVLKAKGIKVIITELSKARKDKARESGVADYILDPSEVDVVEEVKKLTNGEGVDVAFECTSVNKVLDTLVEACKPAANLVIVSIWSHPATVNVHSVVMKELDVRGTIAYCNDHAETIKLVEEGKINLEPFITQRIKLDKLVSEGFERLIHNNESAVKIIVNPNL.

Residues 10 to 350 form the Enoyl reductase (ER) domain; the sequence is GDIRIEDIPE…NNESAVKIIV (341 aa). Zn(2+)-binding residues include cysteine 37, histidine 71, and glutamate 157.

This sequence belongs to the zinc-containing alcohol dehydrogenase family. Zn(2+) is required as a cofactor.

The enzyme catalyses (R,R)-butane-2,3-diol + NAD(+) = (R)-acetoin + NADH + H(+). It catalyses the reaction (S)-acetoin + NAD(+) = diacetyl + NADH + H(+). Its function is as follows. NAD-dependent butanediol dehydrogenase which catalyzes the oxidation of (R,R)-butane-2,3-diol to (3R)-acetoin and of meso-butane-2,3-diol to (3S)-acetoin. Preferentially oxidizes (R,R)-butane-2,3-diol, with a catalytic efficiency approximately fourfold higher than with meso-butane-2,3-diol. Shows a very low activity with (S,S)-butane-2,3-diol. Can also catalyze the reduction of (3R/3S)-acetoin and diacetyl in the presence of NADH. This is (R,R)-butanediol dehydrogenase from Neisseria gonorrhoeae (strain ATCC 700825 / FA 1090).